A 631-amino-acid polypeptide reads, in one-letter code: 1-deoxy-D-xylulose-5-phosphate synthase (631 aa).

Thiamine diphosphate contacts are provided by residues histidine 73 and 114–116 (GHS). Aspartate 145 serves as a coordination point for Mg(2+). Residues 146-147 (GA), asparagine 174, tyrosine 285, and glutamate 366 each bind thiamine diphosphate. Asparagine 174 lines the Mg(2+) pocket.

It belongs to the transketolase family. DXPS subfamily. As to quaternary structure, homodimer. It depends on Mg(2+) as a cofactor. Requires thiamine diphosphate as cofactor.

It catalyses the reaction D-glyceraldehyde 3-phosphate + pyruvate + H(+) = 1-deoxy-D-xylulose 5-phosphate + CO2. Its pathway is metabolic intermediate biosynthesis; 1-deoxy-D-xylulose 5-phosphate biosynthesis; 1-deoxy-D-xylulose 5-phosphate from D-glyceraldehyde 3-phosphate and pyruvate: step 1/1. Catalyzes the acyloin condensation reaction between C atoms 2 and 3 of pyruvate and glyceraldehyde 3-phosphate to yield 1-deoxy-D-xylulose-5-phosphate (DXP). The chain is 1-deoxy-D-xylulose-5-phosphate synthase from Desulfitobacterium hafniense (strain DSM 10664 / DCB-2).